The sequence spans 353 residues: Chorismate synthase (353 aa).

Positions 48 and 54 each coordinate NADP(+). FMN is bound by residues 125–127 (RSS), 238–239 (NA), glycine 278, 293–297 (KPTSS), and arginine 319.

It belongs to the chorismate synthase family. As to quaternary structure, homotetramer. FMNH2 serves as cofactor.

The enzyme catalyses 5-O-(1-carboxyvinyl)-3-phosphoshikimate = chorismate + phosphate. The protein operates within metabolic intermediate biosynthesis; chorismate biosynthesis; chorismate from D-erythrose 4-phosphate and phosphoenolpyruvate: step 7/7. In terms of biological role, catalyzes the anti-1,4-elimination of the C-3 phosphate and the C-6 proR hydrogen from 5-enolpyruvylshikimate-3-phosphate (EPSP) to yield chorismate, which is the branch point compound that serves as the starting substrate for the three terminal pathways of aromatic amino acid biosynthesis. This reaction introduces a second double bond into the aromatic ring system. The polypeptide is Chorismate synthase (Bordetella pertussis (strain Tohama I / ATCC BAA-589 / NCTC 13251)).